The primary structure comprises 573 residues: Urease subunit alpha 1 (573 aa).

The Urease domain occupies 136 to 573 (GGIDTHVHFI…LPLAQRYFLF (438 aa)). Ni(2+) contacts are provided by histidine 141, histidine 143, and lysine 224. The residue at position 224 (lysine 224) is an N6-carboxylysine. Histidine 226 provides a ligand contact to substrate. Residues histidine 253 and histidine 279 each coordinate Ni(2+). Histidine 327 functions as the Proton donor in the catalytic mechanism. A Ni(2+)-binding site is contributed by aspartate 367.

Belongs to the metallo-dependent hydrolases superfamily. Urease alpha subunit family. May form a heterohexamer of 3 UreC (alpha) and 3 UreAB (gamma/beta) subunits. May also form a heterotrimer of UreA (gamma), UreB (beta) and UreC (alpha) subunits. Three heterotrimers associate to form the active enzyme. It depends on Ni cation as a cofactor. Carboxylation allows a single lysine to coordinate two nickel ions.

The protein localises to the cytoplasm. The catalysed reaction is urea + 2 H2O + H(+) = hydrogencarbonate + 2 NH4(+). Its pathway is nitrogen metabolism; urea degradation; CO(2) and NH(3) from urea (urease route): step 1/1. This Streptomyces coelicolor (strain ATCC BAA-471 / A3(2) / M145) protein is Urease subunit alpha 1.